A 249-amino-acid chain; its full sequence is UDP-N-acetyl-D-mannosaminuronic acid transferase (249 aa).

Belongs to the glycosyltransferase 26 family.

It carries out the reaction UDP-N-acetyl-alpha-D-mannosaminouronate + N-acetyl-alpha-D-glucosaminyl-di-trans,octa-cis-undecaprenyl diphosphate = beta-D-ManNAcA-(1-&gt;4)-alpha-D-GlcNAc-di-trans,octa-cis-undecaprenyl diphosphate + UDP + H(+). Its pathway is bacterial outer membrane biogenesis; enterobacterial common antigen biosynthesis. Catalyzes the synthesis of Und-PP-GlcNAc-ManNAcA (Lipid II), the second lipid-linked intermediate involved in enterobacterial common antigen (ECA) synthesis. This Pectobacterium atrosepticum (strain SCRI 1043 / ATCC BAA-672) (Erwinia carotovora subsp. atroseptica) protein is UDP-N-acetyl-D-mannosaminuronic acid transferase.